Consider the following 61-residue polypeptide: Large ribosomal subunit protein uL29 (61 aa).

The protein belongs to the universal ribosomal protein uL29 family.

The chain is Large ribosomal subunit protein uL29 from Campylobacter curvus (strain 525.92).